A 392-amino-acid polypeptide reads, in one-letter code: Bone morphogenetic protein 15 (392 aa).

The N-terminal stretch at 1–25 is a signal peptide; sequence MALLTILRILLWGVVLFMEQRVQMA. The propeptide occupies 26-267; it reads KPGWPSTALL…ESSFLMRSVR (242 aa). Asparagine 85, asparagine 213, asparagine 236, asparagine 349, and asparagine 373 each carry an N-linked (GlcNAc...) asparagine glycan. Cystine bridges form between cysteine 291–cysteine 357, cysteine 320–cysteine 389, and cysteine 324–cysteine 391.

This sequence belongs to the TGF-beta family. In terms of assembly, homodimer. But, in contrast to other members of this family, cannot be disulfide-linked. Ovary specific.

The protein resides in the secreted. Its function is as follows. May be involved in follicular development. Oocyte-specific growth/differentiation factor that stimulates folliculogenesis and granulosa cell (GC) growth. The polypeptide is Bone morphogenetic protein 15 (Bmp15) (Mus musculus (Mouse)).